A 100-amino-acid chain; its full sequence is uncharacterized protein (100 aa).

Residues 68 to 91 (EQYASGAGEKRKEQSSGNSRRKDP) show a composition bias toward basic and acidic residues. The interval 68 to 100 (EQYASGAGEKRKEQSSGNSRRKDPSLYNWSDVK) is disordered.

It belongs to the chlamydial CPn_0121/CT_031/TC_0300 family.

This is an uncharacterized protein from Chlamydia muridarum (strain MoPn / Nigg).